The chain runs to 92 residues: Small nuclear ribonucleoprotein E (92 aa).

The region spanning 18–92 (INLIFRYLQN…NITLLQSVSN (75 aa)) is the Sm domain.

It belongs to the snRNP Sm proteins family. As to quaternary structure, core component of the spliceosomal U1, U2, U4 and U5 small nuclear ribonucleoproteins (snRNPs), the building blocks of the spliceosome. Most spliceosomal snRNPs contain a common set of Sm proteins, SNRPB, SNRPD1, SNRPD2, SNRPD3, SNRPE, SNRPF and SNRPG that assemble in a heptameric protein ring on the Sm site of the small nuclear RNA to form the core snRNP. Component of the U1 snRNP. The U1 snRNP is composed of the U1 snRNA and the 7 core Sm proteins SNRPB, SNRPD1, SNRPD2, SNRPD3, SNRPE, SNRPF and SNRPG, and at least three U1 snRNP-specific proteins SNRNP70/U1-70K, SNRPA/U1-A and SNRPC/U1-C. Component of the U4/U6-U5 tri-snRNP complex composed of the U4, U6 and U5 snRNAs and at least PRPF3, PRPF4, PRPF6, PRPF8, PRPF31, SNRNP200, TXNL4A, SNRNP40, SNRPB, SNRPD1, SNRPD2, SNRPD3, SNRPE, SNRPF, SNRPG, DDX23, CD2BP2, PPIH, SNU13, EFTUD2, SART1 and USP39, plus LSM2, LSM3, LSM4, LSM5, LSM6, LSM7 and LSM8. Component of the U7 snRNP complex, or U7 Sm protein core complex, that is composed of the U7 snRNA and at least LSM10, LSM11, SNRPB, SNRPD3, SNRPE, SNRPF and SNRPG; the complex does not contain SNRPD1 and SNRPD2. Component of the minor spliceosome, which splices U12-type introns. Part of the SMN-Sm complex that contains SMN1, GEMIN2/SIP1, DDX20/GEMIN3, GEMIN4, GEMIN5, GEMIN6, GEMIN7, GEMIN8, STRAP/UNRIP and the Sm proteins SNRPB, SNRPD1, SNRPD2, SNRPD3, SNRPE, SNRPF and SNRPG; catalyzes core snRNPs assembly. Forms a 6S pICln-Sm complex composed of CLNS1A/pICln, SNRPD1, SNRPD2, SNRPE, SNRPF and SNRPG; ring-like structure where CLNS1A/pICln mimics additional Sm proteins and which is unable to assemble into the core snRNP. Interacts with SMN1; the interaction is direct. Interacts with GEMIN2 (via N-terminus); the interaction is direct. Interacts with SNRPF; the interaction is direct. Interacts with SNRPG; the interaction is direct.

It localises to the cytoplasm. Its subcellular location is the cytosol. The protein localises to the nucleus. In terms of biological role, plays a role in pre-mRNA splicing as a core component of the spliceosomal U1, U2, U4 and U5 small nuclear ribonucleoproteins (snRNPs), the building blocks of the spliceosome. Component of both the pre-catalytic spliceosome B complex and activated spliceosome C complexes. As a component of the minor spliceosome, involved in the splicing of U12-type introns in pre-mRNAs. As part of the U7 snRNP it is involved in histone 3'-end processing. This Bos taurus (Bovine) protein is Small nuclear ribonucleoprotein E (SNRPE).